Here is a 144-residue protein sequence, read N- to C-terminus: Ribonuclease VapC37 (144 aa).

Residues 3–137 (IVDANVLLYA…DFGRFEGVRW (135 aa)) form the PINc domain. Mg(2+)-binding residues include Asp-5 and Asp-90.

This sequence belongs to the PINc/VapC protein family. Mg(2+) is required as a cofactor.

It is found in the secreted. In terms of biological role, probable toxic component of a type II toxin-antitoxin (TA) system. An RNase. Upon expression in M.smegmatis inhibits colony formation. The putative cognate antitoxin is VapB37. In Mycobacterium tuberculosis (strain ATCC 25618 / H37Rv), this protein is Ribonuclease VapC37.